Reading from the N-terminus, the 218-residue chain is Peptide methionine sulfoxide reductase MsrA (218 aa).

Residue cysteine 57 is part of the active site.

Belongs to the MsrA Met sulfoxide reductase family.

It carries out the reaction L-methionyl-[protein] + [thioredoxin]-disulfide + H2O = L-methionyl-(S)-S-oxide-[protein] + [thioredoxin]-dithiol. It catalyses the reaction [thioredoxin]-disulfide + L-methionine + H2O = L-methionine (S)-S-oxide + [thioredoxin]-dithiol. Has an important function as a repair enzyme for proteins that have been inactivated by oxidation. Catalyzes the reversible oxidation-reduction of methionine sulfoxide in proteins to methionine. The polypeptide is Peptide methionine sulfoxide reductase MsrA (Brucella suis biovar 1 (strain 1330)).